The chain runs to 347 residues: NADH-quinone oxidoreductase subunit H (347 aa).

The next 9 membrane-spanning stretches (helical) occupy residues 22–42 (GVVS…TAYL), 59–79 (PSLA…KLVF), 93–113 (FIIA…VIPI), 124–144 (IGGI…IIIA), 171–191 (MALS…IQIV), 198–218 (PIWL…SILA), 240–260 (VEYS…NMIL), 285–305 (IPGY…FLWI), and 321–341 (GLKV…AILV).

This sequence belongs to the complex I subunit 1 family. As to quaternary structure, NDH-1 is composed of 14 different subunits. Subunits NuoA, H, J, K, L, M, N constitute the membrane sector of the complex.

The protein resides in the cell inner membrane. It catalyses the reaction a quinone + NADH + 5 H(+)(in) = a quinol + NAD(+) + 4 H(+)(out). Its function is as follows. NDH-1 shuttles electrons from NADH, via FMN and iron-sulfur (Fe-S) centers, to quinones in the respiratory chain. The immediate electron acceptor for the enzyme in this species is believed to be ubiquinone. Couples the redox reaction to proton translocation (for every two electrons transferred, four hydrogen ions are translocated across the cytoplasmic membrane), and thus conserves the redox energy in a proton gradient. This subunit may bind ubiquinone. The protein is NADH-quinone oxidoreductase subunit H of Orientia tsutsugamushi (strain Ikeda) (Rickettsia tsutsugamushi).